Reading from the N-terminus, the 585-residue chain is Membrane protein insertase YidC (585 aa).

6 consecutive transmembrane segments (helical) span residues 5–25, 338–358, 362–382, 432–452, 482–502, and 518–538; these read SVTG…FMSP, FGWD…AFTW, FVSN…LVTY, LGGC…FYVF, IPMY…TVFL, and IMLY…PSGL.

It belongs to the OXA1/ALB3/YidC family. Type 1 subfamily. Interacts with the Sec translocase complex via SecD. Specifically interacts with transmembrane segments of nascent integral membrane proteins during membrane integration.

The protein localises to the cell inner membrane. In terms of biological role, required for the insertion and/or proper folding and/or complex formation of integral membrane proteins into the membrane. Involved in integration of membrane proteins that insert both dependently and independently of the Sec translocase complex, as well as at least some lipoproteins. Aids folding of multispanning membrane proteins. The chain is Membrane protein insertase YidC from Chlorobium luteolum (strain DSM 273 / BCRC 81028 / 2530) (Pelodictyon luteolum).